The following is a 151-amino-acid chain: UPF0179 protein MJ1627 (151 aa).

It belongs to the UPF0179 family.

The sequence is that of UPF0179 protein MJ1627 from Methanocaldococcus jannaschii (strain ATCC 43067 / DSM 2661 / JAL-1 / JCM 10045 / NBRC 100440) (Methanococcus jannaschii).